Consider the following 118-residue polypeptide: NADH-quinone oxidoreductase subunit A (118 aa).

3 helical membrane passes run 5–25 (YAFIGIFALAAITFPLLPLVL), 62–82 (LYALAFVIFDIETVFLYPWAV), and 87–107 (LGLFALFEMVVFLAILTIGLV).

The protein belongs to the complex I subunit 3 family. In terms of assembly, NDH-1 is composed of 14 different subunits. Subunits NuoA, H, J, K, L, M, N constitute the membrane sector of the complex.

It is found in the cell membrane. It carries out the reaction a quinone + NADH + 5 H(+)(in) = a quinol + NAD(+) + 4 H(+)(out). Its function is as follows. NDH-1 shuttles electrons from NADH, via FMN and iron-sulfur (Fe-S) centers, to quinones in the respiratory chain. The immediate electron acceptor for the enzyme in this species is believed to be ubiquinone. Couples the redox reaction to proton translocation (for every two electrons transferred, four hydrogen ions are translocated across the cytoplasmic membrane), and thus conserves the redox energy in a proton gradient. This is NADH-quinone oxidoreductase subunit A from Herpetosiphon aurantiacus (strain ATCC 23779 / DSM 785 / 114-95).